The sequence spans 213 residues: Kynurenine formamidase (213 aa).

W18 serves as a coordination point for substrate. Zn(2+)-binding residues include H48, H52, and D54. The active-site Proton donor/acceptor is the H58. Zn(2+) is bound by residues H160 and E172.

It belongs to the Cyclase 1 superfamily. KynB family. As to quaternary structure, homodimer. The cofactor is Zn(2+).

The enzyme catalyses N-formyl-L-kynurenine + H2O = L-kynurenine + formate + H(+). It functions in the pathway amino-acid degradation; L-tryptophan degradation via kynurenine pathway; L-kynurenine from L-tryptophan: step 2/2. Its function is as follows. Catalyzes the hydrolysis of N-formyl-L-kynurenine to L-kynurenine, the second step in the kynurenine pathway of tryptophan degradation. The sequence is that of Kynurenine formamidase from Burkholderia mallei (strain NCTC 10247).